Consider the following 307-residue polypeptide: Transcription initiation factor IIF subunit beta (307 aa).

Residues 1-12 show a composition bias toward basic and acidic residues; that stretch reads MSEEKPTVRTEE. Disordered regions lie at residues 1 to 22 and 261 to 307; these read MSEE…DAGD and VELR…IDVV. Residues 13–22 are compositionally biased toward acidic residues; sequence DDRYEDDAGD. Polar residues predominate over residues 263–290; sequence LRNQQASQSESSSIDHTGKNTSPDNPGT. Over residues 292 to 307 the composition is skewed to acidic residues; sequence AEEDEDDDGVEMIDVV.

Belongs to the TFIIF beta subunit family. In terms of assembly, component of the fcp1/TFIIF/polII complex via interaction of tfg3 with both tfg1/TFIIF-alpha and tfg2/TFIIF-beta subunits.

Its subcellular location is the nucleus. In terms of biological role, TFIIF is a general transcription initiation factor that binds to RNA polymerase II and helps to recruit it to the initiation complex in collaboration with TFIIB. It promotes transcription elongation. This is Transcription initiation factor IIF subunit beta (tfg2) from Schizosaccharomyces pombe (strain 972 / ATCC 24843) (Fission yeast).